We begin with the raw amino-acid sequence, 233 residues long: Rano class II histocompatibility antigen, A beta chain (233 aa).

The segment at 1–80 (DFVYQFKGLC…DTVCRYNYEE (80 aa)) is beta-1. Topologically, residues 1–194 (DFVYQFKGLC…RAQSESAQSK (194 aa)) are extracellular. Asn14 is a glycosylation site (N-linked (GlcNAc...) asparagine). The beta-2 stretch occupies residues 81-184 (TEVPTSLRRL…SLESPVTVEW (104 aa)). Residues 93–181 (PNVAISLSRT…DHASLESPVT (89 aa)) enclose the Ig-like C1-type domain. A connecting peptide region spans residues 185 to 194 (RAQSESAQSK). Residues 195–215 (MLSGIGGLVLGVIFLGLGLFI) form a helical membrane-spanning segment. Residues 216 to 233 (RHKRQKGPQGPPPAGLLQ) lie on the Cytoplasmic side of the membrane.

This sequence belongs to the MHC class II family.

It localises to the membrane. Its function is as follows. Involved in the presentation of foreign antigens to the immune system. This is Rano class II histocompatibility antigen, A beta chain (RT1-B) from Rattus norvegicus (Rat).